Consider the following 178-residue polypeptide: Peptidyl-prolyl cis-trans isomerase (178 aa).

A signal peptide spans 1-17 (MKLLFFFLVLAVSAAVA). In terms of domain architecture, PPIase cyclophilin-type spans 26 to 177 (FMDIEIDGES…KIAKITDIGL (152 aa)).

This sequence belongs to the cyclophilin-type PPIase family. PPIase A subfamily.

The enzyme catalyses [protein]-peptidylproline (omega=180) = [protein]-peptidylproline (omega=0). Functionally, PPIases accelerate the folding of proteins. It catalyzes the cis-trans isomerization of proline imidic peptide bonds in oligopeptides. Up-regulates interferon gamma production by bovine T-cells. Stimulates high levels of IFN-gamma production by peripheral blood mononuclear cells and T-cells. The IFN-gamma-inducing effect is blocked by cyclosporin A (CsA). The protein is Peptidyl-prolyl cis-trans isomerase of Neospora caninum (Coccidian parasite).